A 210-amino-acid chain; its full sequence is Fibrillarin-like rRNA/tRNA 2'-O-methyltransferase (210 aa).

Residues 70-71 (TT), 88-89 (EY), 113-114 (DA), and 133-136 (DIAQ) each bind S-adenosyl-L-methionine.

Belongs to the methyltransferase superfamily. Fibrillarin family. In terms of assembly, interacts with nop5. Component of box C/D small ribonucleoprotein (sRNP) particles that contain rpl7ae, FlpA and nop5, plus a guide RNA.

Functionally, involved in pre-rRNA and tRNA processing. Utilizes the methyl donor S-adenosyl-L-methionine to catalyze the site-specific 2'-hydroxyl methylation of ribose moieties in rRNA and tRNA. Site specificity is provided by a guide RNA that base pairs with the substrate. Methylation occurs at a characteristic distance from the sequence involved in base pairing with the guide RNA. The sequence is that of Fibrillarin-like rRNA/tRNA 2'-O-methyltransferase from Archaeoglobus fulgidus (strain ATCC 49558 / DSM 4304 / JCM 9628 / NBRC 100126 / VC-16).